We begin with the raw amino-acid sequence, 293 residues long: Acetylglutamate kinase (293 aa).

Substrate contacts are provided by residues 65-66 (GG), arginine 87, and asparagine 180.

It belongs to the acetylglutamate kinase family. ArgB subfamily.

Its subcellular location is the cytoplasm. It catalyses the reaction N-acetyl-L-glutamate + ATP = N-acetyl-L-glutamyl 5-phosphate + ADP. It functions in the pathway amino-acid biosynthesis; L-arginine biosynthesis; N(2)-acetyl-L-ornithine from L-glutamate: step 2/4. Its function is as follows. Catalyzes the ATP-dependent phosphorylation of N-acetyl-L-glutamate. The chain is Acetylglutamate kinase from Cereibacter sphaeroides (strain ATCC 17029 / ATH 2.4.9) (Rhodobacter sphaeroides).